The following is a 2290-amino-acid chain: Protein Ycf2 (2290 aa).

ATP is bound at residue 1644–1651 (GSIGTGRS).

This sequence belongs to the Ycf2 family.

Its subcellular location is the plastid. The protein localises to the chloroplast stroma. Probable ATPase of unknown function. Its presence in a non-photosynthetic plant (Epifagus virginiana) and experiments in tobacco indicate that it has an essential function which is probably not related to photosynthesis. The protein is Protein Ycf2 of Barbarea verna (Land cress).